A 94-amino-acid chain; its full sequence is Small ribosomal subunit protein bS18 (94 aa).

Positions Met1–Arg11 are enriched in polar residues. Positions Met1–Arg24 are disordered.

The protein belongs to the bacterial ribosomal protein bS18 family. As to quaternary structure, part of the 30S ribosomal subunit. Forms a tight heterodimer with protein bS6.

Its function is as follows. Binds as a heterodimer with protein bS6 to the central domain of the 16S rRNA, where it helps stabilize the platform of the 30S subunit. In Pelobacter propionicus (strain DSM 2379 / NBRC 103807 / OttBd1), this protein is Small ribosomal subunit protein bS18.